The chain runs to 608 residues: DNA mismatch repair protein MutL (608 aa).

This sequence belongs to the DNA mismatch repair MutL/HexB family.

In terms of biological role, this protein is involved in the repair of mismatches in DNA. It is required for dam-dependent methyl-directed DNA mismatch repair. May act as a 'molecular matchmaker', a protein that promotes the formation of a stable complex between two or more DNA-binding proteins in an ATP-dependent manner without itself being part of a final effector complex. This is DNA mismatch repair protein MutL from Anoxybacillus flavithermus (strain DSM 21510 / WK1).